We begin with the raw amino-acid sequence, 238 residues long: Ribosomal RNA small subunit methyltransferase G (238 aa).

Residues Gly77, Phe82, Ala128–Glu129, and Arg147 each bind S-adenosyl-L-methionine. Residues Lys219–Glu238 form a disordered region.

Belongs to the methyltransferase superfamily. RNA methyltransferase RsmG family.

It localises to the cytoplasm. Functionally, specifically methylates the N7 position of guanine in position 535 of 16S rRNA. This is Ribosomal RNA small subunit methyltransferase G from Listeria monocytogenes serovar 1/2a (strain ATCC BAA-679 / EGD-e).